Reading from the N-terminus, the 257-residue chain is Pyridoxine 5'-phosphate synthase (257 aa).

3-amino-2-oxopropyl phosphate is bound at residue Asn-16. 18 to 19 (DH) is a 1-deoxy-D-xylulose 5-phosphate binding site. Arg-27 provides a ligand contact to 3-amino-2-oxopropyl phosphate. His-52 functions as the Proton acceptor in the catalytic mechanism. Positions 54 and 59 each coordinate 1-deoxy-D-xylulose 5-phosphate. Glu-79 (proton acceptor) is an active-site residue. Residue Thr-109 coordinates 1-deoxy-D-xylulose 5-phosphate. The active-site Proton donor is the His-200. Residues Gly-201 and 222–223 (GH) contribute to the 3-amino-2-oxopropyl phosphate site.

It belongs to the PNP synthase family. In terms of assembly, homooctamer; tetramer of dimers.

It localises to the cytoplasm. It carries out the reaction 3-amino-2-oxopropyl phosphate + 1-deoxy-D-xylulose 5-phosphate = pyridoxine 5'-phosphate + phosphate + 2 H2O + H(+). It functions in the pathway cofactor biosynthesis; pyridoxine 5'-phosphate biosynthesis; pyridoxine 5'-phosphate from D-erythrose 4-phosphate: step 5/5. Catalyzes the complicated ring closure reaction between the two acyclic compounds 1-deoxy-D-xylulose-5-phosphate (DXP) and 3-amino-2-oxopropyl phosphate (1-amino-acetone-3-phosphate or AAP) to form pyridoxine 5'-phosphate (PNP) and inorganic phosphate. This is Pyridoxine 5'-phosphate synthase from Burkholderia pseudomallei (strain 1710b).